The sequence spans 220 residues: MGAAARSLPLAFCLLLLGTLLPRADACSCSPVHPQQAFCNADIVIRAKAVNKKEVDSGNDIYGNPIKRIQYEIKQIKMFKGPDQDIEFIYTAPAAAVCGVSLDIGGKKEYLIAGKAEGNGNMHITLCDFIVPWDTLSATQKKSLNHRYQMGCECKITRCPMIPCYISSPDECLWMDWVTEKNINGHQAKFFACIKRSDGSCAWYRGAAPPKQEFLDIEDP.

The first 26 residues, 1 to 26 (MGAAARSLPLAFCLLLLGTLLPRADA), serve as a signal peptide directing secretion. Cys27 contributes to the Zn(2+) binding site. Positions 27–30 (CSCS) are involved in metalloproteinase-binding. 6 disulfides stabilise this stretch: Cys27–Cys98, Cys29–Cys127, Cys39–Cys152, Cys154–Cys201, Cys159–Cys164, and Cys172–Cys193. Positions 27 to 152 (CSCSPVHPQQ…SLNHRYQMGC (126 aa)) constitute an NTR domain.

Belongs to the protease inhibitor I35 (TIMP) family. Interacts (via the C-terminal) with MMP2 (via the C-terminal PEX domain); the interaction inhibits the MMP2 activity. In terms of processing, the activity of TIMP2 is dependent on the presence of disulfide bonds.

The protein resides in the secreted. Functionally, complexes with metalloproteinases (such as collagenases) and irreversibly inactivates them by binding to their catalytic zinc cofactor. The sequence is that of Metalloproteinase inhibitor 2 (TIMP2) from Bos taurus (Bovine).